A 148-amino-acid polypeptide reads, in one-letter code: Cytochrome c oxidase subunit 4, mitochondrial (148 aa).

The transit peptide at 1–24 (MFALRSIRSATKAFQTTSIVSQRG) directs the protein to the mitochondrion.

As to quaternary structure, slime mold cytochrome c oxidase consists of at least seven different polypeptides species, subunits I, II, III, IV, V, VI, and VIIe/s in order of MW.

The protein localises to the mitochondrion inner membrane. It catalyses the reaction 4 Fe(II)-[cytochrome c] + O2 + 8 H(+)(in) = 4 Fe(III)-[cytochrome c] + 2 H2O + 4 H(+)(out). This protein is one of the nuclear-coded polypeptide chains of cytochrome c oxidase, the terminal oxidase in mitochondrial electron transport. This chain is Cytochrome c oxidase subunit 4, mitochondrial (cxdA), found in Dictyostelium discoideum (Social amoeba).